Reading from the N-terminus, the 282-residue chain is Bis(5'-nucleosyl)-tetraphosphatase, symmetrical (282 aa).

It belongs to the Ap4A hydrolase family.

The catalysed reaction is P(1),P(4)-bis(5'-adenosyl) tetraphosphate + H2O = 2 ADP + 2 H(+). In terms of biological role, hydrolyzes diadenosine 5',5'''-P1,P4-tetraphosphate to yield ADP. This is Bis(5'-nucleosyl)-tetraphosphatase, symmetrical from Burkholderia pseudomallei (strain 1106a).